The primary structure comprises 498 residues: Glycerol kinase (498 aa).

Thr-14 contributes to the ADP binding site. Positions 14 and 15 each coordinate ATP. Thr-14 is a binding site for sn-glycerol 3-phosphate. An ADP-binding site is contributed by Arg-18. Residues Arg-84, Glu-85, Tyr-136, and Asp-246 each contribute to the sn-glycerol 3-phosphate site. Glycerol-binding residues include Arg-84, Glu-85, Tyr-136, Asp-246, and Gln-247. Positions 268 and 311 each coordinate ADP. 4 residues coordinate ATP: Thr-268, Gly-311, Gln-315, and Gly-412. ADP contacts are provided by Gly-412 and Asn-416.

The protein belongs to the FGGY kinase family.

It carries out the reaction glycerol + ATP = sn-glycerol 3-phosphate + ADP + H(+). Its pathway is polyol metabolism; glycerol degradation via glycerol kinase pathway; sn-glycerol 3-phosphate from glycerol: step 1/1. Its activity is regulated as follows. Inhibited by fructose 1,6-bisphosphate (FBP). Functionally, key enzyme in the regulation of glycerol uptake and metabolism. Catalyzes the phosphorylation of glycerol to yield sn-glycerol 3-phosphate. The polypeptide is Glycerol kinase (Leptospira biflexa serovar Patoc (strain Patoc 1 / Ames)).